A 236-amino-acid chain; its full sequence is Eukaryotic translation initiation factor 3 subunit J (236 aa).

Residues 20–88 (ANNINKWEGE…AEEEKRLANL (69 aa)) are disordered. Residues 28 to 46 (GEDDDEDVKESWEDEEEKK) are compositionally biased toward acidic residues. Basic and acidic residues-rich tracts occupy residues 47 to 58 (DEEKPTKTEVPV) and 68 to 88 (AKLE…LANL).

Belongs to the eIF-3 subunit J family. As to quaternary structure, component of the eukaryotic translation initiation factor 3 (eIF-3) complex. The eIF-3 complex interacts with pix.

The protein resides in the cytoplasm. Component of the eukaryotic translation initiation factor 3 (eIF-3) complex, which is involved in protein synthesis of a specialized repertoire of mRNAs and, together with other initiation factors, stimulates binding of mRNA and methionyl-tRNAi to the 40S ribosome. The eIF-3 complex specifically targets and initiates translation of a subset of mRNAs involved in cell proliferation. In Drosophila willistoni (Fruit fly), this protein is Eukaryotic translation initiation factor 3 subunit J.